The following is a 430-amino-acid chain: Meiotically up-regulated gene 132 protein (430 aa).

The protein belongs to the UPF0300 family.

The protein resides in the mitochondrion. Has a role in meiosis. The sequence is that of Meiotically up-regulated gene 132 protein (mug132) from Schizosaccharomyces pombe (strain 972 / ATCC 24843) (Fission yeast).